We begin with the raw amino-acid sequence, 98 residues long: Integration host factor subunit alpha (98 aa).

It belongs to the bacterial histone-like protein family. In terms of assembly, heterodimer of an alpha and a beta chain.

This protein is one of the two subunits of integration host factor, a specific DNA-binding protein that functions in genetic recombination as well as in transcriptional and translational control. This chain is Integration host factor subunit alpha, found in Acinetobacter baumannii (strain AB307-0294).